A 129-amino-acid chain; its full sequence is Glycine cleavage system H protein (129 aa).

Positions 24-106 (TYTVGITEHA…YGQGWIFKIK (83 aa)) constitute a Lipoyl-binding domain. Residue K65 is modified to N6-lipoyllysine.

This sequence belongs to the GcvH family. As to quaternary structure, the glycine cleavage system is composed of four proteins: P, T, L and H. (R)-lipoate is required as a cofactor.

In terms of biological role, the glycine cleavage system catalyzes the degradation of glycine. The H protein shuttles the methylamine group of glycine from the P protein to the T protein. The polypeptide is Glycine cleavage system H protein (Cronobacter sakazakii (strain ATCC BAA-894) (Enterobacter sakazakii)).